The primary structure comprises 121 residues: Large ribosomal subunit protein bL17 (121 aa).

The protein belongs to the bacterial ribosomal protein bL17 family. As to quaternary structure, part of the 50S ribosomal subunit. Contacts protein L32.

The polypeptide is Large ribosomal subunit protein bL17 (Rubrobacter xylanophilus (strain DSM 9941 / JCM 11954 / NBRC 16129 / PRD-1)).